The chain runs to 194 residues: MSQIKLIVGLANPGAKYEETRHNAGEWLVNELARVFNVTLKEEAKYFGKVAKINTPQGEVRLLVPTTFMNLSGKAVGSLANFYRIKPEEILVAHDELDLLPGVAKIKQGGGHGGHNGLKDIIAALGNSNNFYRVRIGIGHPGHKDLVASYVLGKPSPSDQPLINVAVDEASRCVELLFKEGIVKATNRLNGFKA.

TRNA is bound at residue Tyr-17. His-22 functions as the Proton acceptor in the catalytic mechanism. TRNA contacts are provided by Phe-68, Asn-70, and Asn-116.

Belongs to the PTH family. In terms of assembly, monomer.

It localises to the cytoplasm. It carries out the reaction an N-acyl-L-alpha-aminoacyl-tRNA + H2O = an N-acyl-L-amino acid + a tRNA + H(+). Its function is as follows. Hydrolyzes ribosome-free peptidyl-tRNAs (with 1 or more amino acids incorporated), which drop off the ribosome during protein synthesis, or as a result of ribosome stalling. In terms of biological role, catalyzes the release of premature peptidyl moieties from peptidyl-tRNA molecules trapped in stalled 50S ribosomal subunits, and thus maintains levels of free tRNAs and 50S ribosomes. The protein is Peptidyl-tRNA hydrolase of Glaesserella parasuis serovar 5 (strain SH0165) (Haemophilus parasuis).